Reading from the N-terminus, the 346-residue chain is Methylthioribose-1-phosphate isomerase (346 aa).

Substrate is bound by residues 54 to 56, Arg-91, and Gln-192; that span reads RGA. Asp-233 serves as the catalytic Proton donor. Residue 243–244 participates in substrate binding; that stretch reads NK.

The protein belongs to the eIF-2B alpha/beta/delta subunits family. MtnA subfamily.

It catalyses the reaction 5-(methylsulfanyl)-alpha-D-ribose 1-phosphate = 5-(methylsulfanyl)-D-ribulose 1-phosphate. It functions in the pathway amino-acid biosynthesis; L-methionine biosynthesis via salvage pathway; L-methionine from S-methyl-5-thio-alpha-D-ribose 1-phosphate: step 1/6. Catalyzes the interconversion of methylthioribose-1-phosphate (MTR-1-P) into methylthioribulose-1-phosphate (MTRu-1-P). The polypeptide is Methylthioribose-1-phosphate isomerase (Yersinia pseudotuberculosis serotype O:1b (strain IP 31758)).